The following is a 214-amino-acid chain: Soluble inorganic pyrophosphatase (214 aa).

The substrate site is built by K64, R78, and Y90. The Mg(2+) site is built by D100, D105, and D137. Y174 is a binding site for substrate.

Belongs to the PPase family. Requires Mg(2+) as cofactor.

It localises to the cytoplasm. The enzyme catalyses diphosphate + H2O = 2 phosphate + H(+). This Oryza sativa subsp. indica (Rice) protein is Soluble inorganic pyrophosphatase (IPP).